The sequence spans 362 residues: Peptide chain release factor 1 (362 aa).

Position 237 is an N5-methylglutamine (Gln237).

The protein belongs to the prokaryotic/mitochondrial release factor family. In terms of processing, methylated by PrmC. Methylation increases the termination efficiency of RF1.

It is found in the cytoplasm. Functionally, peptide chain release factor 1 directs the termination of translation in response to the peptide chain termination codons UAG and UAA. The protein is Peptide chain release factor 1 of Vibrio campbellii (strain ATCC BAA-1116).